Reading from the N-terminus, the 627-residue chain is 1-deoxy-D-xylulose-5-phosphate synthase (627 aa).

Thiamine diphosphate-binding positions include histidine 87 and 128–130; that span reads GHS. A Mg(2+)-binding site is contributed by aspartate 159. Residues 160–161, asparagine 188, phenylalanine 295, and glutamate 375 each bind thiamine diphosphate; that span reads GA. Residue asparagine 188 participates in Mg(2+) binding.

Belongs to the transketolase family. DXPS subfamily. Homodimer. Mg(2+) is required as a cofactor. Requires thiamine diphosphate as cofactor.

The enzyme catalyses D-glyceraldehyde 3-phosphate + pyruvate + H(+) = 1-deoxy-D-xylulose 5-phosphate + CO2. It participates in metabolic intermediate biosynthesis; 1-deoxy-D-xylulose 5-phosphate biosynthesis; 1-deoxy-D-xylulose 5-phosphate from D-glyceraldehyde 3-phosphate and pyruvate: step 1/1. Its function is as follows. Catalyzes the acyloin condensation reaction between C atoms 2 and 3 of pyruvate and glyceraldehyde 3-phosphate to yield 1-deoxy-D-xylulose-5-phosphate (DXP). The protein is 1-deoxy-D-xylulose-5-phosphate synthase of Pseudomonas paraeruginosa (strain DSM 24068 / PA7) (Pseudomonas aeruginosa (strain PA7)).